The following is a 286-amino-acid chain: Glycine--tRNA ligase alpha subunit (286 aa).

It belongs to the class-II aminoacyl-tRNA synthetase family. Tetramer of two alpha and two beta subunits.

It localises to the cytoplasm. The catalysed reaction is tRNA(Gly) + glycine + ATP = glycyl-tRNA(Gly) + AMP + diphosphate. This chain is Glycine--tRNA ligase alpha subunit, found in Thermotoga petrophila (strain ATCC BAA-488 / DSM 13995 / JCM 10881 / RKU-1).